Consider the following 1117-residue polypeptide: Isoleucine--tRNA ligase (1117 aa).

A 'HIGH' region motif is present at residues 64 to 74; it reads PFANGLPHYGH. Positions 647-651 match the 'KMSKS' region motif; the sequence is KLSKR. Lysine 650 contributes to the ATP binding site.

The protein belongs to the class-I aminoacyl-tRNA synthetase family. IleS type 2 subfamily. As to quaternary structure, monomer. Zn(2+) serves as cofactor.

It is found in the cytoplasm. The catalysed reaction is tRNA(Ile) + L-isoleucine + ATP = L-isoleucyl-tRNA(Ile) + AMP + diphosphate. Its function is as follows. Catalyzes the attachment of isoleucine to tRNA(Ile). As IleRS can inadvertently accommodate and process structurally similar amino acids such as valine, to avoid such errors it has two additional distinct tRNA(Ile)-dependent editing activities. One activity is designated as 'pretransfer' editing and involves the hydrolysis of activated Val-AMP. The other activity is designated 'posttransfer' editing and involves deacylation of mischarged Val-tRNA(Ile). In Ehrlichia ruminantium (strain Welgevonden), this protein is Isoleucine--tRNA ligase.